The chain runs to 352 residues: Maleylacetate reductase (352 aa).

This sequence belongs to the iron-containing alcohol dehydrogenase family.

It carries out the reaction 3-oxoadipate + NAD(+) = maleylacetate + NADH + H(+). It catalyses the reaction 3-oxoadipate + NADP(+) = maleylacetate + NADPH + H(+). The protein operates within aromatic compound metabolism; 3-chlorocatechol degradation. This is Maleylacetate reductase (clcE) from Pseudomonas knackmussii (strain DSM 6978 / CCUG 54928 / LMG 23759 / B13).